The sequence spans 320 residues: Lipoyl synthase (320 aa).

Positions 67, 72, 78, 93, 97, 100, and 307 each coordinate [4Fe-4S] cluster. The Radical SAM core domain occupies 79-296 (FNHGTATFMI…RDKAQAMGFE (218 aa)).

It belongs to the radical SAM superfamily. Lipoyl synthase family. The cofactor is [4Fe-4S] cluster.

It is found in the cytoplasm. It catalyses the reaction [[Fe-S] cluster scaffold protein carrying a second [4Fe-4S](2+) cluster] + N(6)-octanoyl-L-lysyl-[protein] + 2 oxidized [2Fe-2S]-[ferredoxin] + 2 S-adenosyl-L-methionine + 4 H(+) = [[Fe-S] cluster scaffold protein] + N(6)-[(R)-dihydrolipoyl]-L-lysyl-[protein] + 4 Fe(3+) + 2 hydrogen sulfide + 2 5'-deoxyadenosine + 2 L-methionine + 2 reduced [2Fe-2S]-[ferredoxin]. It participates in protein modification; protein lipoylation via endogenous pathway; protein N(6)-(lipoyl)lysine from octanoyl-[acyl-carrier-protein]: step 2/2. Catalyzes the radical-mediated insertion of two sulfur atoms into the C-6 and C-8 positions of the octanoyl moiety bound to the lipoyl domains of lipoate-dependent enzymes, thereby converting the octanoylated domains into lipoylated derivatives. This chain is Lipoyl synthase, found in Pasteurella multocida (strain Pm70).